Reading from the N-terminus, the 417-residue chain is Serine hydroxymethyltransferase (417 aa).

(6S)-5,6,7,8-tetrahydrofolate contacts are provided by residues L121 and 125–127; that span reads GHL. K229 is modified (N6-(pyridoxal phosphate)lysine). 355 to 357 contributes to the (6S)-5,6,7,8-tetrahydrofolate binding site; that stretch reads SPF.

The protein belongs to the SHMT family. Homodimer. Requires pyridoxal 5'-phosphate as cofactor.

It is found in the cytoplasm. The catalysed reaction is (6R)-5,10-methylene-5,6,7,8-tetrahydrofolate + glycine + H2O = (6S)-5,6,7,8-tetrahydrofolate + L-serine. It participates in one-carbon metabolism; tetrahydrofolate interconversion. Its pathway is amino-acid biosynthesis; glycine biosynthesis; glycine from L-serine: step 1/1. Catalyzes the reversible interconversion of serine and glycine with tetrahydrofolate (THF) serving as the one-carbon carrier. This reaction serves as the major source of one-carbon groups required for the biosynthesis of purines, thymidylate, methionine, and other important biomolecules. Also exhibits THF-independent aldolase activity toward beta-hydroxyamino acids, producing glycine and aldehydes, via a retro-aldol mechanism. This chain is Serine hydroxymethyltransferase, found in Shewanella frigidimarina (strain NCIMB 400).